We begin with the raw amino-acid sequence, 360 residues long: tRNA-specific 2-thiouridylase MnmA (360 aa).

ATP contacts are provided by residues 9–16 (AMSGGVDS) and L35. Catalysis depends on C104, which acts as the Nucleophile. A disulfide bridge connects residues C104 and C197. An ATP-binding site is contributed by G128. The tract at residues 147 to 149 (KDQ) is interaction with tRNA. C197 serves as the catalytic Cysteine persulfide intermediate.

Belongs to the MnmA/TRMU family.

The protein resides in the cytoplasm. It catalyses the reaction S-sulfanyl-L-cysteinyl-[protein] + uridine(34) in tRNA + AH2 + ATP = 2-thiouridine(34) in tRNA + L-cysteinyl-[protein] + A + AMP + diphosphate + H(+). Its function is as follows. Catalyzes the 2-thiolation of uridine at the wobble position (U34) of tRNA, leading to the formation of s(2)U34. This chain is tRNA-specific 2-thiouridylase MnmA, found in Salinispora tropica (strain ATCC BAA-916 / DSM 44818 / JCM 13857 / NBRC 105044 / CNB-440).